The primary structure comprises 608 residues: Elongation factor 4 (608 aa).

In terms of domain architecture, tr-type G spans 11–193 (DRIRNFSIIA…QIVQKIPAPS (183 aa)). GTP contacts are provided by residues 23 to 28 (DHGKST) and 140 to 143 (NKID).

It belongs to the TRAFAC class translation factor GTPase superfamily. Classic translation factor GTPase family. LepA subfamily.

It localises to the cell membrane. It catalyses the reaction GTP + H2O = GDP + phosphate + H(+). In terms of biological role, required for accurate and efficient protein synthesis under certain stress conditions. May act as a fidelity factor of the translation reaction, by catalyzing a one-codon backward translocation of tRNAs on improperly translocated ribosomes. Back-translocation proceeds from a post-translocation (POST) complex to a pre-translocation (PRE) complex, thus giving elongation factor G a second chance to translocate the tRNAs correctly. Binds to ribosomes in a GTP-dependent manner. This Anoxybacillus flavithermus (strain DSM 21510 / WK1) protein is Elongation factor 4.